Reading from the N-terminus, the 82-residue chain is Putative membrane protein insertion efficiency factor (82 aa).

It belongs to the UPF0161 family.

It localises to the cell inner membrane. Its function is as follows. Could be involved in insertion of integral membrane proteins into the membrane. This Thermus thermophilus (strain ATCC BAA-163 / DSM 7039 / HB27) protein is Putative membrane protein insertion efficiency factor.